A 437-amino-acid polypeptide reads, in one-letter code: Trigger factor (437 aa).

The PPIase FKBP-type domain maps to 163 to 248 (GDRVIIDFEG…LNNVSEPTLP (86 aa)).

Belongs to the FKBP-type PPIase family. Tig subfamily.

Its subcellular location is the cytoplasm. It catalyses the reaction [protein]-peptidylproline (omega=180) = [protein]-peptidylproline (omega=0). Involved in protein export. Acts as a chaperone by maintaining the newly synthesized protein in an open conformation. Functions as a peptidyl-prolyl cis-trans isomerase. The sequence is that of Trigger factor from Neisseria gonorrhoeae (strain NCCP11945).